The following is a 150-amino-acid chain: Mating pheromone 1 (150 aa).

Positions 1–16 (MKAIFIILAILMVTQA) are cleaved as a signal peptide. Residues 17 to 52 (FKMTSKVNTKLQSQIQSKFQSKNKLASTFQTSSKLK) constitute a propeptide that is removed on maturation.

The protein localises to the secreted. Its function is as follows. Mating ciliate pheromones (or gamones) are diffusible extracellular communication signals that distinguish different intraspecific classes of cells commonly referred to as 'mating types'. They prepare the latter for conjugation by changing their cell surface properties. The polypeptide is Mating pheromone 1 (Euplotoides octocarinatus (Freshwater ciliate)).